A 264-amino-acid chain; its full sequence is Phosphatidylglycerol--prolipoprotein diacylglyceryl transferase (264 aa).

The next 3 helical transmembrane spans lie at 17 to 37 (LAIHWYGLTYLVAFGLFLWLA), 59 to 79 (LLFYGVLGVIIGGRLGYVLFY), and 95 to 115 (WKGGMAFHGGLLGVIGAMALF). Residue Arg-142 coordinates a 1,2-diacyl-sn-glycero-3-phospho-(1'-sn-glycerol). The next 2 membrane-spanning stretches (helical) occupy residues 205 to 225 (GQVSGAFLVGYGVLRFIAEYF) and 241 to 261 (MGQWLCVPMVAAGVALWVWAG).

It belongs to the Lgt family.

It localises to the cell inner membrane. The enzyme catalyses L-cysteinyl-[prolipoprotein] + a 1,2-diacyl-sn-glycero-3-phospho-(1'-sn-glycerol) = an S-1,2-diacyl-sn-glyceryl-L-cysteinyl-[prolipoprotein] + sn-glycerol 1-phosphate + H(+). It functions in the pathway protein modification; lipoprotein biosynthesis (diacylglyceryl transfer). Functionally, catalyzes the transfer of the diacylglyceryl group from phosphatidylglycerol to the sulfhydryl group of the N-terminal cysteine of a prolipoprotein, the first step in the formation of mature lipoproteins. This Methylibium petroleiphilum (strain ATCC BAA-1232 / LMG 22953 / PM1) protein is Phosphatidylglycerol--prolipoprotein diacylglyceryl transferase.